Here is a 288-residue protein sequence, read N- to C-terminus: Glutamate racemase (288 aa).

Substrate is bound by residues 10–11 (DS) and 42–43 (YG). The Proton donor/acceptor role is filled by cysteine 73. 74-75 (NT) is a substrate binding site. Residue cysteine 184 is the Proton donor/acceptor of the active site. 185–186 (TH) lines the substrate pocket.

This sequence belongs to the aspartate/glutamate racemases family.

The enzyme catalyses L-glutamate = D-glutamate. Its pathway is cell wall biogenesis; peptidoglycan biosynthesis. Functionally, provides the (R)-glutamate required for cell wall biosynthesis. The sequence is that of Glutamate racemase from Corynebacterium kroppenstedtii (strain DSM 44385 / JCM 11950 / CIP 105744 / CCUG 35717).